A 115-amino-acid chain; its full sequence is Beta-2-microglobulin (115 aa).

A signal peptide spans 1-16 (MKIALVLLSLLALTLA). The Ig-like C1-type domain maps to 22–113 (PPVVKVYTAE…GNPSKKYRLD (92 aa)).

Belongs to the beta-2-microglobulin family. As to quaternary structure, heterodimer of an alpha chain and a beta chain. Beta-2-microglobulin is the beta-chain of major histocompatibility complex class I molecules.

It localises to the secreted. Component of the class I major histocompatibility complex (MHC). Involved in the presentation of peptide antigens to the immune system. This Xenopus laevis (African clawed frog) protein is Beta-2-microglobulin (b2m).